The primary structure comprises 192 residues: MEYRSLTLDDFLSRFQLLRPQINREPLNHRQAAVLIPIVRRPQPGLLLTQRSIHLRKHAGQVAFPGGAVDDTDASVIAAALREAEEEVAIPPSAVEVIGVLPPVDSVTGYQVTPVVGIIPPDLPYRASEDEVSAVFEMPLAQALHLGRYHPLDIYRRGDSHRVWLSWYEQYFVWGMTAGIIRELALQIGVKP.

Residues 29-160 (HRQAAVLIPI…PLDIYRRGDS (132 aa)) enclose the Nudix hydrolase domain. The Nudix box motif lies at 67-89 (GAVDDTDASVIAAALREAEEEVA). Mg(2+) contacts are provided by E83 and E87.

This sequence belongs to the Nudix hydrolase family. PCD1 subfamily. Mn(2+) serves as cofactor. The cofactor is Mg(2+).

Functionally, probably mediates the hydrolysis of some nucleoside diphosphate derivatives. This is an uncharacterized protein from Shigella flexneri serotype 5b (strain 8401).